A 236-amino-acid polypeptide reads, in one-letter code: SPbeta prophage-derived uncharacterized protein YomV (236 aa).

This chain is SPbeta prophage-derived uncharacterized protein YomV (yomV), found in Bacillus subtilis (strain 168).